The primary structure comprises 823 residues: Protein ROOT HAIR DEFECTIVE 3 homolog 2 (823 aa).

Residues 1–688 are Cytoplasmic-facing; that stretch reads MEVPISGGGG…EAHRRSNNWL (688 aa). Positions 45–260 constitute a GB1/RHD3-type G domain; that stretch reads GLSYAVVSIV…IAPGGLAADR (216 aa). Residue 55–62 coordinates GTP; it reads GPQGSGKS. Residues 226-246 are a coiled coil; it reads LSSYEEKENLFKEQVGQLRQR. The chain crosses the membrane as a helical span at residues 689–709; sequence PPAWTVLLLAILGYNEFIFLL. Residues 710-712 are Lumenal-facing; sequence RNP. Residues 713-733 traverse the membrane as a helical segment; it reads LYLLGLFVAFVVSYAAWLQYD. Topologically, residues 734 to 823 are cytoplasmic; sequence ITAYFRHGTL…SVGSNSDDES (90 aa). Residues 770-823 are disordered; that stretch reads NQKSSSHPPRHRPPLHPQSFRNQAQQQSQAQVQYQAPSSLSSSSSVGSNSDDES. A compositionally biased stretch (low complexity) spans 786–823; the sequence is PQSFRNQAQQQSQAQVQYQAPSSLSSSSSVGSNSDDES.

Belongs to the TRAFAC class dynamin-like GTPase superfamily. GB1/RHD3 GTPase family. RHD3 subfamily.

Its subcellular location is the endoplasmic reticulum membrane. Functionally, probable GTP-binding protein that may be involved in cell development. The sequence is that of Protein ROOT HAIR DEFECTIVE 3 homolog 2 from Oryza sativa subsp. japonica (Rice).